The chain runs to 173 residues: Crossover junction endodeoxyribonuclease RuvC (173 aa).

Active-site residues include Asp11, Glu71, and Asp143. Positions 11, 71, and 143 each coordinate Mg(2+).

Belongs to the RuvC family. In terms of assembly, homodimer which binds Holliday junction (HJ) DNA. The HJ becomes 2-fold symmetrical on binding to RuvC with unstacked arms; it has a different conformation from HJ DNA in complex with RuvA. In the full resolvosome a probable DNA-RuvA(4)-RuvB(12)-RuvC(2) complex forms which resolves the HJ. Requires Mg(2+) as cofactor.

It is found in the cytoplasm. The enzyme catalyses Endonucleolytic cleavage at a junction such as a reciprocal single-stranded crossover between two homologous DNA duplexes (Holliday junction).. The RuvA-RuvB-RuvC complex processes Holliday junction (HJ) DNA during genetic recombination and DNA repair. Endonuclease that resolves HJ intermediates. Cleaves cruciform DNA by making single-stranded nicks across the HJ at symmetrical positions within the homologous arms, yielding a 5'-phosphate and a 3'-hydroxyl group; requires a central core of homology in the junction. The consensus cleavage sequence is 5'-(A/T)TT(C/G)-3'. Cleavage occurs on the 3'-side of the TT dinucleotide at the point of strand exchange. HJ branch migration catalyzed by RuvA-RuvB allows RuvC to scan DNA until it finds its consensus sequence, where it cleaves and resolves the cruciform DNA. In Brucella suis biovar 1 (strain 1330), this protein is Crossover junction endodeoxyribonuclease RuvC.